The following is a 393-amino-acid chain: Chorismate synthase (393 aa).

Positions 40 and 46 each coordinate NADP(+). Residues 129-131 (RSS), 249-250 (QA), glycine 301, 316-320 (KPIPT), and arginine 342 contribute to the FMN site.

It belongs to the chorismate synthase family. As to quaternary structure, homotetramer. The cofactor is FMNH2.

It carries out the reaction 5-O-(1-carboxyvinyl)-3-phosphoshikimate = chorismate + phosphate. The protein operates within metabolic intermediate biosynthesis; chorismate biosynthesis; chorismate from D-erythrose 4-phosphate and phosphoenolpyruvate: step 7/7. Functionally, catalyzes the anti-1,4-elimination of the C-3 phosphate and the C-6 proR hydrogen from 5-enolpyruvylshikimate-3-phosphate (EPSP) to yield chorismate, which is the branch point compound that serves as the starting substrate for the three terminal pathways of aromatic amino acid biosynthesis. This reaction introduces a second double bond into the aromatic ring system. This is Chorismate synthase from Geotalea uraniireducens (strain Rf4) (Geobacter uraniireducens).